A 521-amino-acid chain; its full sequence is GMP synthase [glutamine-hydrolyzing] (521 aa).

Positions 9–203 constitute a Glutamine amidotransferase type-1 domain; it reads KILILDFGSQ…ISGICQCEKN (195 aa). Cys86 functions as the Nucleophile in the catalytic mechanism. Active-site residues include His177 and Glu179. Residues 204-396 enclose the GMPS ATP-PPase domain; it reads WTTDNIIAKL…LSIPPHIIYR (193 aa). Residue 231–237 participates in ATP binding; the sequence is SGGVDSL.

In terms of assembly, homodimer.

The enzyme catalyses XMP + L-glutamine + ATP + H2O = GMP + L-glutamate + AMP + diphosphate + 2 H(+). The protein operates within purine metabolism; GMP biosynthesis; GMP from XMP (L-Gln route): step 1/1. Catalyzes the synthesis of GMP from XMP. This Ruthia magnifica subsp. Calyptogena magnifica protein is GMP synthase [glutamine-hydrolyzing].